Here is a 69-residue protein sequence, read N- to C-terminus: MKQLIIDLIKLYRYSIGLLIPPSCRFYPTCSNYMHEALVKHGLIKGLWLGMKRILRCHPWNQGGYDPVP.

This sequence belongs to the UPF0161 family.

Its subcellular location is the cell inner membrane. Could be involved in insertion of integral membrane proteins into the membrane. The sequence is that of Putative membrane protein insertion efficiency factor from Nitrosomonas europaea (strain ATCC 19718 / CIP 103999 / KCTC 2705 / NBRC 14298).